A 522-amino-acid chain; its full sequence is Amine oxidase [flavin-containing] (522 aa).

The Cytoplasmic portion of the chain corresponds to 1 to 492 (MTANAYDVIV…WERNLPSVGG (492 aa)). At C398 the chain carries S-8alpha-FAD cysteine. Residues 493–513 (FLKFMGVSSFLAAATAAGLVA) traverse the membrane as a helical; Anchor for type IV membrane protein segment. Residues 514-522 (CKKGLLPRC) lie on the Mitochondrial intermembrane side of the membrane.

The protein belongs to the flavin monoamine oxidase family. As to quaternary structure, monomer, homo- or heterodimer (containing two subunits of similar size). Each subunit contains a covalently bound flavin. Enzymatically active as monomer. The cofactor is FAD. In terms of tissue distribution, strongest expression in brain and intestine, followed by liver, heart and gill. Little expression in spleen, eye or muscle. In brain, highest activity in noradrenergic and serotonergic cell groups and those of the habenulointerpeduncular pathway; moderate levels in dopaminergic cell clusters.

The protein resides in the mitochondrion outer membrane. It carries out the reaction a secondary aliphatic amine + O2 + H2O = a primary amine + an aldehyde + H2O2. The catalysed reaction is a primary methyl amine + O2 + H2O = an aldehyde + H2O2 + NH4(+). The enzyme catalyses serotonin + O2 + H2O = (5-hydroxyindol-3-yl)acetaldehyde + H2O2 + NH4(+). It catalyses the reaction 2-phenylethylamine + O2 + H2O = 2-phenylacetaldehyde + H2O2 + NH4(+). It carries out the reaction tyramine + O2 + H2O = (4-hydroxyphenyl)acetaldehyde + H2O2 + NH4(+). The catalysed reaction is dopamine + O2 + H2O = 3,4-dihydroxyphenylacetaldehyde + H2O2 + NH4(+). The enzyme catalyses (R)-adrenaline + O2 + H2O = (R)-3,4-dihydroxymandelaldehyde + methylamine + H2O2. It catalyses the reaction (R)-noradrenaline + O2 + H2O = (R)-3,4-dihydroxymandelaldehyde + H2O2 + NH4(+). It carries out the reaction kynuramine + O2 + H2O = 3-(2-aminophenyl)-3-oxopropanal + H2O2 + NH4(+). The catalysed reaction is tryptamine + O2 + H2O = indole-3-acetaldehyde + H2O2 + NH4(+). Its activity is regulated as follows. Inhibited by both clorgyline (selective MAOA inhibitor) and deprenyl (selective MAOB inhibitor). In terms of biological role, catalyzes the oxidative deamination of biogenic and xenobiotic amines and has important functions in the metabolism of neuroactive and vasoactive amines in the central nervous system and peripheral tissues. Preferentially oxidizes serotonin and tyramine. Also catalyzes the oxidative deamination of kynuramine to 3-(2-aminophenyl)-3-oxopropanal that can spontaneously condense to 4-hydroxyquinoline. This Danio rerio (Zebrafish) protein is Amine oxidase [flavin-containing].